The primary structure comprises 275 residues: MDKPASRHFSVLIIDDEPQVTSELRELLENSGYRCVTSTHRESAIASFQADPNIGLVICDLYLGQDNGIRLIESLKEVAGNGRFFESIILTGHDGRQEVIEAMRVGAADYYQKPVAPQELLHGLERLESRLHERVRSQLSLSHVNQRLEYLAESLNSIYRDIHKIKYEVHGNSQPSALRSEDSQPSAPPAPVAESQVSPSNPLFGKLSPRQQAVARLVSKGLTNYQIAYELGITENTVKLYVSQVLRLMHMHNRTQLALALSPAAMQQGSGAVVH.

One can recognise a Response regulatory domain in the interval 10–128; sequence SVLIIDDEPQ…ELLHGLERLE (119 aa). Asp60 is subject to 4-aspartylphosphate. Residues 173–205 are disordered; that stretch reads SQPSALRSEDSQPSAPPAPVAESQVSPSNPLFG. The HTH luxR-type domain maps to 200-265; that stretch reads SNPLFGKLSP…QLALALSPAA (66 aa). The segment at residues 224–243 is a DNA-binding region (H-T-H motif); it reads NYQIAYELGITENTVKLYVS.

Post-translationally, phosphorylated by PprA.

Its function is as follows. Member of the two-component regulatory system PprA/PprB involved in biofilm formation by controlling the expression of many related genes including type IVb pili major subunit flp pilin, adhesin bapA or cupE fimbriae. Functions as a transcription regulator by direct binding to promoter regions. Negatively regulates its own transcription. This Pseudomonas aeruginosa (strain ATCC 15692 / DSM 22644 / CIP 104116 / JCM 14847 / LMG 12228 / 1C / PRS 101 / PAO1) protein is Two-component response regulator PprB.